A 165-amino-acid polypeptide reads, in one-letter code: Cysteine-rich hydrophobic domain-containing protein 2 (165 aa).

Positions 1 to 26 (MADFDEIYEEEEDEERALEEQLLKYS) form a coiled coil. The CHIC motif (Cys-rich) motif lies at 88–106 (CGCLCCCCTLGCSMWPVIC).

The protein belongs to the CHIC family. Post-translationally, palmitoylation in the CHIC motif is required for membrane association.

It localises to the cell membrane. It is found in the cytoplasmic vesicle. The polypeptide is Cysteine-rich hydrophobic domain-containing protein 2 (CHIC2) (Homo sapiens (Human)).